Consider the following 292-residue polypeptide: Alpha-soluble NSF attachment protein (292 aa).

Belongs to the SNAP family.

It is found in the cytoplasmic vesicle. The protein localises to the membrane. Functionally, required for vesicular transport between the endoplasmic reticulum and the Golgi apparatus. Also between the endosome and phagosome. This is Alpha-soluble NSF attachment protein from Drosophila melanogaster (Fruit fly).